The following is a 182-amino-acid chain: Small ribosomal subunit protein uS5 (182 aa).

The S5 DRBM domain maps to 16 to 79 (FVDRLVHINR…ESAKRGMIYV (64 aa)).

This sequence belongs to the universal ribosomal protein uS5 family. As to quaternary structure, part of the 30S ribosomal subunit. Contacts proteins S4 and S8.

In terms of biological role, with S4 and S12 plays an important role in translational accuracy. Functionally, located at the back of the 30S subunit body where it stabilizes the conformation of the head with respect to the body. This chain is Small ribosomal subunit protein uS5, found in Bartonella henselae (strain ATCC 49882 / DSM 28221 / CCUG 30454 / Houston 1) (Rochalimaea henselae).